Reading from the N-terminus, the 108-residue chain is FK506-binding protein 1 (108 aa).

In terms of domain architecture, PPIase FKBP-type spans 20-108 (GDAVTIHYVG…VFDVELLGIN (89 aa)).

Belongs to the FKBP-type PPIase family. FKBP1 subfamily.

It localises to the cytoplasm. It carries out the reaction [protein]-peptidylproline (omega=180) = [protein]-peptidylproline (omega=0). With respect to regulation, inhibited by both FK506 and rapamycin. In terms of biological role, PPIases accelerate the folding of proteins. It catalyzes the cis-trans isomerization of proline imidic peptide bonds in oligopeptides. The polypeptide is FK506-binding protein 1 (FPR1) (Yarrowia lipolytica (strain CLIB 122 / E 150) (Yeast)).